We begin with the raw amino-acid sequence, 276 residues long: Malonyl-[acyl-carrier protein] O-methyltransferase (276 aa).

It belongs to the methyltransferase superfamily.

It carries out the reaction malonyl-[ACP] + S-adenosyl-L-methionine = malonyl-[ACP] methyl ester + S-adenosyl-L-homocysteine. It functions in the pathway cofactor biosynthesis; biotin biosynthesis. Its function is as follows. Converts the free carboxyl group of a malonyl-thioester to its methyl ester by transfer of a methyl group from S-adenosyl-L-methionine (SAM). It allows to synthesize pimeloyl-ACP via the fatty acid synthetic pathway. The protein is Malonyl-[acyl-carrier protein] O-methyltransferase of Paenibacillus sp. (strain JDR-2).